Reading from the N-terminus, the 319-residue chain is MNFQELIMTLQRFWAEQNCVIQQPYDLEKGAGTMNPATFLRVLGPEPWRVAYVEPSRRPTDGRYGENPNRLQHYYQYQVILKPSPDNVQDLYLQSLEAMGINPLEHDIRFVEDNWESPTLGAWGLGWEVWLDGMEITQFTYFQQCGGFDCHPVSAEITYGLERLAMYIQQVNSVYDIEWVDGITYGDIHHQTEVDYSHYNFTFADTAMLFNLFNAYEAEAMRVVEQGLVQPAYDYTLKCSHTFNLLDARGAISVTERTAYIGRVRHLARLCAAAYLEQRQKLGYPLLKARQQQPEAPAPGPAAVVGGRDRKDACDVKEG.

Positions 290–319 (RQQQPEAPAPGPAAVVGGRDRKDACDVKEG) are disordered. Residues 307 to 319 (GRDRKDACDVKEG) show a composition bias toward basic and acidic residues.

Belongs to the class-II aminoacyl-tRNA synthetase family. Tetramer of two alpha and two beta subunits.

It localises to the cytoplasm. It catalyses the reaction tRNA(Gly) + glycine + ATP = glycyl-tRNA(Gly) + AMP + diphosphate. This chain is Glycine--tRNA ligase alpha subunit, found in Moorella thermoacetica (strain ATCC 39073 / JCM 9320).